Here is a 201-residue protein sequence, read N- to C-terminus: FMN-dependent NADH:quinone oxidoreductase (201 aa).

FMN is bound by residues Ser-10, 16-18 (SQS), 96-99 (MYNF), and 140-143 (SRGG).

Belongs to the azoreductase type 1 family. Homodimer. FMN is required as a cofactor.

It carries out the reaction 2 a quinone + NADH + H(+) = 2 a 1,4-benzosemiquinone + NAD(+). It catalyses the reaction N,N-dimethyl-1,4-phenylenediamine + anthranilate + 2 NAD(+) = 2-(4-dimethylaminophenyl)diazenylbenzoate + 2 NADH + 2 H(+). Functionally, quinone reductase that provides resistance to thiol-specific stress caused by electrophilic quinones. Also exhibits azoreductase activity. Catalyzes the reductive cleavage of the azo bond in aromatic azo compounds to the corresponding amines. This chain is FMN-dependent NADH:quinone oxidoreductase, found in Citrobacter koseri (strain ATCC BAA-895 / CDC 4225-83 / SGSC4696).